A 198-amino-acid chain; its full sequence is Snake venom metalloproteinase BpirMP (198 aa).

A Peptidase M12B domain is found at 1–197 (TYIEVAVVAD…HNPQCILNEP (197 aa)). Glu4 and Asp88 together coordinate Ca(2+). 3 disulfides stabilise this stretch: Cys112-Cys192, Cys152-Cys176, and Cys154-Cys159. His137 is a binding site for Zn(2+). Glu138 is an active-site residue. Residues His141 and His147 each contribute to the Zn(2+) site. The Ca(2+) site is built by Cys192 and Asn195.

Belongs to the venom metalloproteinase (M12B) family. P-I subfamily. As to quaternary structure, monomer. The cofactor is Zn(2+). As to expression, expressed by the venom gland.

It localises to the secreted. Its activity is regulated as follows. Inhibited by the chelating agents EDTA, EGTA and 1,10-phenanthroline. Is not inhibited by serine proteinase inhibitors aprotinin, leupeptin and benzamidine. In terms of biological role, zinc metalloprotease that preferentially degrades Aalpha chain of fibrinogen (FGA) (at a dose of 5 ug, whereas at a dose of 10 ug, both FGA and FGB are completely degraded). Degrades fibrin gel in a dose-dependent manner, as well blood clots formed in vitro (thrombolytic activity). Induces hemorrhage (in the dorsal skin of mice), with an MHD of 50 ug. The basal membrane components collagen (all chains of type IV) (COL4A4), fibronectin (FN1), laminin and nidogen are all degraded by this toxin. This is Snake venom metalloproteinase BpirMP from Bothrops pirajai (Piraja's lancehead).